The sequence spans 428 residues: Glutamate-1-semialdehyde 2,1-aminomutase (428 aa).

Residue Lys-267 is modified to N6-(pyridoxal phosphate)lysine.

This sequence belongs to the class-III pyridoxal-phosphate-dependent aminotransferase family. HemL subfamily. As to quaternary structure, homodimer. The cofactor is pyridoxal 5'-phosphate.

The protein localises to the cytoplasm. It catalyses the reaction (S)-4-amino-5-oxopentanoate = 5-aminolevulinate. Its pathway is porphyrin-containing compound metabolism; protoporphyrin-IX biosynthesis; 5-aminolevulinate from L-glutamyl-tRNA(Glu): step 2/2. The polypeptide is Glutamate-1-semialdehyde 2,1-aminomutase (Flavobacterium johnsoniae (strain ATCC 17061 / DSM 2064 / JCM 8514 / BCRC 14874 / CCUG 350202 / NBRC 14942 / NCIMB 11054 / UW101) (Cytophaga johnsonae)).